The primary structure comprises 540 residues: Protein dml-1 (540 aa).

The segment at 517–540 is disordered; sequence NELAEMADEYHEGWSSGSDDGDDD.

It belongs to the misato family.

The protein localises to the mitochondrion. Its function is as follows. Involved in the partitioning of the mitochondrial organelle and mitochondrial DNA (mtDNA) inheritance. This is Protein dml-1 (dml-1) from Neurospora crassa (strain ATCC 24698 / 74-OR23-1A / CBS 708.71 / DSM 1257 / FGSC 987).